A 399-amino-acid chain; its full sequence is Argininosuccinate synthase (399 aa).

Residue 9–17 (AYSGGLDTS) coordinates ATP. Tyr88 is an L-citrulline binding site. Residue Gly118 participates in ATP binding. L-aspartate is bound by residues Thr120, Asn124, and Asp125. Asn124 provides a ligand contact to L-citrulline. 4 residues coordinate L-citrulline: Arg128, Ser176, Glu261, and Tyr273.

It belongs to the argininosuccinate synthase family. Type 1 subfamily. In terms of assembly, homotetramer.

The protein resides in the cytoplasm. It catalyses the reaction L-citrulline + L-aspartate + ATP = 2-(N(omega)-L-arginino)succinate + AMP + diphosphate + H(+). It functions in the pathway amino-acid biosynthesis; L-arginine biosynthesis; L-arginine from L-ornithine and carbamoyl phosphate: step 2/3. In Mycobacterium leprae (strain TN), this protein is Argininosuccinate synthase.